The primary structure comprises 252 residues: 2-succinyl-6-hydroxy-2,4-cyclohexadiene-1-carboxylate synthase (252 aa).

Belongs to the AB hydrolase superfamily. MenH family. As to quaternary structure, monomer.

It catalyses the reaction 5-enolpyruvoyl-6-hydroxy-2-succinyl-cyclohex-3-ene-1-carboxylate = (1R,6R)-6-hydroxy-2-succinyl-cyclohexa-2,4-diene-1-carboxylate + pyruvate. It participates in quinol/quinone metabolism; 1,4-dihydroxy-2-naphthoate biosynthesis; 1,4-dihydroxy-2-naphthoate from chorismate: step 3/7. It functions in the pathway quinol/quinone metabolism; menaquinone biosynthesis. Its function is as follows. Catalyzes a proton abstraction reaction that results in 2,5-elimination of pyruvate from 2-succinyl-5-enolpyruvyl-6-hydroxy-3-cyclohexene-1-carboxylate (SEPHCHC) and the formation of 2-succinyl-6-hydroxy-2,4-cyclohexadiene-1-carboxylate (SHCHC). This is 2-succinyl-6-hydroxy-2,4-cyclohexadiene-1-carboxylate synthase from Salmonella typhi.